The chain runs to 472 residues: H(+)/Cl(-) exchange transporter ClcA (472 aa).

Residues 1-32 (MKAETPSFEAHQFVRVRRGDAVRRLIQRDKTP) are Cytoplasmic-facing. A helical transmembrane segment spans residues 33-69 (LAVLLMAAVVGTLAGLVGVAFEKSVNWVQNQRIGALA). The Periplasmic portion of the chain corresponds to 70 to 76 (QVADHWY). A helical transmembrane segment spans residues 77–100 (LVWPLAFILSALLAMVGYFLVRRF). The Selectivity filter part_1 signature appears at 106–110 (GSGIP). Ser107 provides a ligand contact to chloride. Positions 109–116 (IPEIEGAL) form an intramembrane region, helical. The Cytoplasmic segment spans residues 117–123 (EELRPVR). The next 2 helical transmembrane spans lie at 124 to 141 (WWRV…TLGA) and 148 to 166 (EGPM…LDIF). The Selectivity filter part_2 motif lies at 146-150 (GREGP). At 167 to 176 (RMRSPEARHT) the chain is on the cytoplasmic side. Intramembrane regions (helical) lie at residues 177-189 (LLAT…LSAA) and 193-201 (PLAGILFII). Residues 202–214 (EEMRPQFRYNLIS) lie on the Cytoplasmic side of the membrane. Residues 215-232 (IKAVFTGVIMSSIVFRIF) traverse the membrane as a helical segment. Topologically, residues 233–252 (NGEAAIIEVGKLSNAPVNTL) are periplasmic. Residues 253 to 281 (WLYLVLGMLFGCFGPLFNFLVLRTQDIFQ) traverse the membrane as a helical segment. Residues 282–287 (RIHGGN) lie on the Cytoplasmic side of the membrane. A helical transmembrane segment spans residues 288–309 (IKTWVLMGGVIGGICGLLGLMQ). Topologically, residues 310-329 (PSAVGGGFNLIPIAAAGNFS) are periplasmic. The next 2 membrane-spanning stretches (helical) occupy residues 330-349 (VGLL…ICFS) and 355-376 (GIFA…MAAI). Residues 355–359 (GIFAP) carry the Selectivity filter part_3 motif. Positions 356 and 357 each coordinate chloride. Over 377 to 386 (PLFPAYHLDA) the chain is Periplasmic. The helical intramembrane region spans 387–401 (GTFAIAGMGALLAAS). The segment at residues 402-404 (VRA) is an intramembrane region (note=Loop between two helices). Residues 405–416 (PLTGIVLVLEMT) constitute an intramembrane region (helical). An intramembrane region (note=Loop between two helices) is located at residues 417–421 (DNYQL). Residues 422–438 (ILPMIITCLGATLLAQF) form a helical membrane-spanning segment. Topologically, residues 439 to 472 (LGGKPLYSTILQRTLAKQEAEQAAKAQQAPRENT) are cytoplasmic. Tyr445 lines the chloride pocket.

It belongs to the chloride channel (TC 2.A.49) family. ClcA subfamily. Homodimer.

Its subcellular location is the cell inner membrane. The enzyme catalyses 2 chloride(in) + H(+)(out) = 2 chloride(out) + H(+)(in). Functionally, proton-coupled chloride transporter. Functions as antiport system and exchanges two chloride ions for 1 proton. Probably acts as an electrical shunt for an outwardly-directed proton pump that is linked to amino acid decarboxylation, as part of the extreme acid resistance (XAR) response. This is H(+)/Cl(-) exchange transporter ClcA from Klebsiella pneumoniae (strain 342).